The primary structure comprises 229 residues: Cytidylate kinase (229 aa).

ATP is bound at residue 12 to 20 (GPSGSGKGT).

The protein belongs to the cytidylate kinase family. Type 1 subfamily.

It localises to the cytoplasm. The enzyme catalyses CMP + ATP = CDP + ADP. The catalysed reaction is dCMP + ATP = dCDP + ADP. The polypeptide is Cytidylate kinase (Azotobacter vinelandii (strain DJ / ATCC BAA-1303)).